The chain runs to 364 residues: Variable large protein 21 (364 aa).

A signal peptide spans 1–26 (MRKRISAIINKLNISIMMMIVVLMIG). Cys-27 is lipidated: N-palmitoyl cysteine. Cys-27 carries S-diacylglycerol cysteine lipidation.

This sequence belongs to the variable large protein (Vlp) family. Alpha subfamily.

It localises to the cell outer membrane. Its function is as follows. The Vlp and Vsp proteins are antigenically distinct proteins, only one vlp or vsp gene is transcriptionally active at any one time. Switching between these genes is a mechanism of host immune response evasion. The chain is Variable large protein 21 from Borrelia hermsii.